The primary structure comprises 1238 residues: Protein translocase subunit SecA 1 (1238 aa).

Residues glutamine 107, 125-129, and aspartate 570 each bind ATP; that span reads GEGKT. Residues 1194–1220 form a disordered region; that stretch reads AAGSEGRAEGSVDTVRVEEPRIGRNAP. Residues 1199–1215 show a composition bias toward basic and acidic residues; that stretch reads GRAEGSVDTVRVEEPRI. Zn(2+)-binding residues include cysteine 1221, cysteine 1223, cysteine 1232, and cysteine 1233.

Belongs to the SecA family. In terms of assembly, monomer and homodimer. Part of the essential Sec protein translocation apparatus which comprises SecA, SecYEG and auxiliary proteins SecDF. Other proteins may also be involved. Zn(2+) is required as a cofactor.

The protein resides in the cell inner membrane. The protein localises to the cytoplasm. It carries out the reaction ATP + H2O + cellular proteinSide 1 = ADP + phosphate + cellular proteinSide 2.. Its function is as follows. Part of the Sec protein translocase complex. Interacts with the SecYEG preprotein conducting channel. Has a central role in coupling the hydrolysis of ATP to the transfer of proteins into and across the cell membrane, serving as an ATP-driven molecular motor driving the stepwise translocation of polypeptide chains across the membrane. This Rhodopirellula baltica (strain DSM 10527 / NCIMB 13988 / SH1) protein is Protein translocase subunit SecA 1.